The chain runs to 109 residues: Heterogeneous nuclear ribonucleoprotein-like protein HD40 (109 aa).

The segment at 1-36 (EEVSNGQEHTEGMXQGEXNXIXVEEHHEGEKNSHLV) is disordered. Residues 23-36 (VEEHHEGEKNSHLV) are compositionally biased toward basic and acidic residues. The region spanning 40 to 50 (EEKKLFVGALS) is the RRM domain. Asymmetric dimethylarginine is present on residues arginine 102 and arginine 105.

It localises to the cytoplasm. The protein localises to the nucleus. This Artemia salina (Brine shrimp) protein is Heterogeneous nuclear ribonucleoprotein-like protein HD40.